The following is a 79-amino-acid chain: Scutelatoxin (79 aa).

The first 21 residues, 1–21 (MKTLLLTLVVMTIMCLDLGYT), serve as a signal peptide directing secretion. Disulfide bonds link Cys-24–Cys-41, Cys-34–Cys-59, Cys-63–Cys-71, and Cys-72–Cys-77.

It belongs to the three-finger toxin family. Short-chain subfamily. In terms of tissue distribution, expressed by the venom gland.

Its subcellular location is the secreted. The sequence is that of Scutelatoxin from Oxyuranus scutellatus scutellatus (Australian taipan).